Reading from the N-terminus, the 77-residue chain is MRIEIMIDKEQKISQSTLDALESELYRNLRPLYPKTVIRIRKGSSNGVELTGLQLDEERKQVMKIMQKVWEDDSWLH.

Belongs to the DinI family.

In Escherichia coli, this protein is DinI-like protein in retron Ec67.